Reading from the N-terminus, the 225-residue chain is MGFGDLKSPAGLQVLNDYLADKSYIEGYVPSQADVAVFEAVSSPPPADLCHALRWYNHIKSYEKEKASLPGVKKALGKYGPADVEDTTGSGATDSKDDDDIDLFGSDDEEESEEAKRLREERLAQYESKKAKKPALVAKSSILLDVKPWDDETDMAKLEECVRSIQADGLVWGSSKLVPVGYGIKKLQIQCVVEDDKVGTDMLEEQITAFEDYVQSMDVAAFNKI.

The region spanning 2 to 84 (GFGDLKSPAG…ALGKYGPADV (83 aa)) is the GST C-terminal domain. At K7 the chain carries N6-acetyllysine. Phosphoserine occurs at positions 8 and 42. The interval 78–115 (KYGPADVEDTTGSGATDSKDDDDIDLFGSDDEEESEEA) is disordered. Phosphothreonine is present on residues T88 and T93. S95 and S106 each carry phosphoserine. Positions 96–113 (KDDDDIDLFGSDDEEESE) are enriched in acidic residues. Residue K147 forms a Glycyl lysine isopeptide (Lys-Gly) (interchain with G-Cter in SUMO2) linkage. S174 is modified (phosphoserine).

It belongs to the EF-1-beta/EF-1-delta family. In terms of assembly, EF-1 is composed of 4 subunits: alpha, beta (alpha subunit of the eEF1B subcomplex), delta (beta subunit of the eEF1B subcomplex), and gamma (gamma subunit of the eEF1B subcomplex). Interacts with elongation factor EEF1A1. Post-translationally, phosphorylation affects the GDP/GTP exchange rate.

Functionally, catalytic subunit of the guanine nucleotide exchange factor (GEF) (eEF1B subcomplex) of the eukaryotic elongation factor 1 complex (eEF1). Stimulates the exchange of GDP for GTP on elongation factor 1A (eEF1A), probably by displacing GDP from the nucleotide binding pocket in eEF1A. This is Elongation factor 1-beta (EEF1B2) from Homo sapiens (Human).